Reading from the N-terminus, the 668-residue chain is Macrolide export ATP-binding/permease protein MacB 1/2 (668 aa).

Residues Ile-9–Gln-247 enclose the ABC transporter domain. ATP is bound at residue Gly-45 to Ser-52. The disordered stretch occupies residues Arg-230–Ala-257. Over residues Asp-237–Val-255 the composition is skewed to pro residues. 4 helical membrane-spanning segments follow: residues Phe-294 to Gly-314, Leu-541 to Met-561, Leu-598 to Phe-618, and Met-634 to Val-654.

This sequence belongs to the ABC transporter superfamily. Macrolide exporter (TC 3.A.1.122) family. In terms of assembly, homodimer.

Its subcellular location is the cell inner membrane. In terms of biological role, non-canonical ABC transporter that contains transmembrane domains (TMD), which form a pore in the inner membrane, and an ATP-binding domain (NBD), which is responsible for energy generation. Confers resistance against macrolides. This Paracoccus denitrificans (strain Pd 1222) protein is Macrolide export ATP-binding/permease protein MacB 1/2.